The primary structure comprises 460 residues: Monocarboxylate transporter 12 (460 aa).

Residues 1–10 are Cytoplasmic-facing; that stretch reads MTQEKRSLHK. Transmembrane regions (helical) follow at residues 11–31, 58–78, 86–106, 115–135, 148–168, 177–197, 246–266, 282–302, 329–349, 354–374, 376–396, and 406–426; these read TPPDGGWGWMIVIGCFFVTVC, AWIHSIVDCSTMLCAPIGSYV, VGIILGGVLASTGLVLSSFAT, LGVLTGLGFALCYSPAIAMVG, IAMSGSGIGTFILAPVVQLLI, LLILGGFVSNLCVCGALMRPI, FIILAVSFLFLAYGCSPPFVY, AFLMSILGIVDIVGNITFGWV, FLPILTCFQLLVPFSVMFGYF, VALIPVITGDVVGTSNLSSAL, VVFFLHAVPYLLSPPIAGWLV, and FLLSGFSMIFCSILLGLAKII. The Cytoplasmic segment spans residues 427–460; sequence NRIKKNPQATVVRSSDIKQEVWTNGDVSCLNAIS.

It belongs to the major facilitator superfamily. Monocarboxylate porter (TC 2.A.1.13) family.

Its subcellular location is the cell membrane. It is found in the basolateral cell membrane. The catalysed reaction is creatine(in) = creatine(out). It carries out the reaction guanidinoacetate(in) = guanidinoacetate(out). Its function is as follows. Functions as a transporter for creatine and as well for its precursor guanidinoacetate. Transport of creatine and GAA is independent of resting membrane potential and extracellular Na(+), Cl(-), or pH. Contributes to the process of creatine biosynthesis and distribution. This is Monocarboxylate transporter 12 (slc16a12) from Xenopus laevis (African clawed frog).